We begin with the raw amino-acid sequence, 239 residues long: Probable transcriptional regulatory protein RBAM_007230 (239 aa).

Belongs to the TACO1 family. YeeN subfamily.

The protein resides in the cytoplasm. This chain is Probable transcriptional regulatory protein RBAM_007230, found in Bacillus velezensis (strain DSM 23117 / BGSC 10A6 / LMG 26770 / FZB42) (Bacillus amyloliquefaciens subsp. plantarum).